The primary structure comprises 229 residues: uncharacterized protein (229 aa).

Positions 66–94 (GHEKLQIQSALRDIESAENQARVQQCNAK) form a coiled coil.

This is an uncharacterized protein from Ostreid herpesvirus 1 (isolate France) (OsHV-1).